The chain runs to 466 residues: UDP-N-acetylmuramoylalanine--D-glutamate ligase (466 aa).

121 to 127 (GTNGKST) contacts ATP.

It belongs to the MurCDEF family.

It localises to the cytoplasm. The enzyme catalyses UDP-N-acetyl-alpha-D-muramoyl-L-alanine + D-glutamate + ATP = UDP-N-acetyl-alpha-D-muramoyl-L-alanyl-D-glutamate + ADP + phosphate + H(+). The protein operates within cell wall biogenesis; peptidoglycan biosynthesis. Functionally, cell wall formation. Catalyzes the addition of glutamate to the nucleotide precursor UDP-N-acetylmuramoyl-L-alanine (UMA). The sequence is that of UDP-N-acetylmuramoylalanine--D-glutamate ligase from Nitrobacter winogradskyi (strain ATCC 25391 / DSM 10237 / CIP 104748 / NCIMB 11846 / Nb-255).